A 384-amino-acid polypeptide reads, in one-letter code: Ribosomal RNA large subunit methyltransferase G (384 aa).

Belongs to the methyltransferase superfamily. RlmG family.

Its subcellular location is the cytoplasm. The enzyme catalyses guanosine(1835) in 23S rRNA + S-adenosyl-L-methionine = N(2)-methylguanosine(1835) in 23S rRNA + S-adenosyl-L-homocysteine + H(+). Functionally, specifically methylates the guanine in position 1835 (m2G1835) of 23S rRNA. The protein is Ribosomal RNA large subunit methyltransferase G of Pseudoalteromonas atlantica (strain T6c / ATCC BAA-1087).